A 599-amino-acid polypeptide reads, in one-letter code: Putative sensor histidine kinase NtrY-like (599 aa).

A run of 4 helical transmembrane segments spans residues 17–37 (VLIFTLAIAAIIFACATFYVI), 44–64 (FSTIIGFLLVDLAIFLILGVL), 85–105 (IVIAFSLVAAIPTIIVSVFSV), and 285–305 (IMFIFIALLLLFVAISFGVIF). In terms of domain architecture, HAMP spans 307–361 (AKIVKPIKKLVTATDKVKDGDLTVQVPENEVDKDEIGTLYAAFNRMIKQLSRQQR). A Histidine kinase domain is found at 378 to 589 (KVAHEIKNPL…IIDIKFDLKK (212 aa)). H381 carries the phosphohistidine; by autocatalysis modification.

The protein localises to the cell membrane. The catalysed reaction is ATP + protein L-histidine = ADP + protein N-phospho-L-histidine.. In terms of biological role, member of the two-component regulatory system RF_0427/RF_0895. The protein is Putative sensor histidine kinase NtrY-like of Rickettsia felis (strain ATCC VR-1525 / URRWXCal2) (Rickettsia azadi).